Here is a 205-residue protein sequence, read N- to C-terminus: Holliday junction branch migration complex subunit RuvA (205 aa).

The tract at residues 1-64 (MIGKLKGLID…EDQIKLFGFR (64 aa)) is domain I. The interval 65-143 (SDLEREWFRL…GFASVDPAVA (79 aa)) is domain II. Positions 144–153 (HLSGAIEERS) are flexible linker. A domain III region spans residues 153–205 (SAPRPVADAISALVNLGYGQPQAAAAIAAAARSAGDAAQTAQLIKLGLKELSK).

Belongs to the RuvA family. As to quaternary structure, homotetramer. Forms an RuvA(8)-RuvB(12)-Holliday junction (HJ) complex. HJ DNA is sandwiched between 2 RuvA tetramers; dsDNA enters through RuvA and exits via RuvB. An RuvB hexamer assembles on each DNA strand where it exits the tetramer. Each RuvB hexamer is contacted by two RuvA subunits (via domain III) on 2 adjacent RuvB subunits; this complex drives branch migration. In the full resolvosome a probable DNA-RuvA(4)-RuvB(12)-RuvC(2) complex forms which resolves the HJ.

The protein resides in the cytoplasm. In terms of biological role, the RuvA-RuvB-RuvC complex processes Holliday junction (HJ) DNA during genetic recombination and DNA repair, while the RuvA-RuvB complex plays an important role in the rescue of blocked DNA replication forks via replication fork reversal (RFR). RuvA specifically binds to HJ cruciform DNA, conferring on it an open structure. The RuvB hexamer acts as an ATP-dependent pump, pulling dsDNA into and through the RuvAB complex. HJ branch migration allows RuvC to scan DNA until it finds its consensus sequence, where it cleaves and resolves the cruciform DNA. In Rhodopseudomonas palustris (strain BisA53), this protein is Holliday junction branch migration complex subunit RuvA.